We begin with the raw amino-acid sequence, 207 residues long: GILT-like protein 2 (207 aa).

Positions 1–19 (MRAAVFVCLLLGWVGVATP) are cleaved as a signal peptide. Cysteine 40 and cysteine 43 form a disulfide bridge. Residue asparagine 182 is glycosylated (N-linked (GlcNAc...) asparagine).

Belongs to the GILT family.

Its subcellular location is the secreted. Functionally, probable lysosomal thiol reductase that can reduce protein disulfide bonds. Involved in the immune response to bacterial infection. The sequence is that of GILT-like protein 2 from Drosophila melanogaster (Fruit fly).